The following is a 116-amino-acid chain: Iron-sulfur cluster insertion protein ErpA (116 aa).

Iron-sulfur cluster-binding residues include cysteine 44, cysteine 108, and cysteine 110.

It belongs to the HesB/IscA family. As to quaternary structure, homodimer. It depends on iron-sulfur cluster as a cofactor.

Functionally, required for insertion of 4Fe-4S clusters for at least IspG. The protein is Iron-sulfur cluster insertion protein ErpA of Shewanella denitrificans (strain OS217 / ATCC BAA-1090 / DSM 15013).